Consider the following 129-residue polypeptide: Small ribosomal subunit protein uS8c (129 aa).

This sequence belongs to the universal ribosomal protein uS8 family. Part of the 30S ribosomal subunit.

Its subcellular location is the plastid. The protein resides in the chloroplast. One of the primary rRNA binding proteins, it binds directly to 16S rRNA central domain where it helps coordinate assembly of the platform of the 30S subunit. The sequence is that of Small ribosomal subunit protein uS8c (rps8) from Oltmannsiellopsis viridis (Marine flagellate).